Here is an 88-residue protein sequence, read N- to C-terminus: Small ribosomal subunit protein bS18 (88 aa).

Belongs to the bacterial ribosomal protein bS18 family. As to quaternary structure, part of the 30S ribosomal subunit. Forms a tight heterodimer with protein bS6.

Functionally, binds as a heterodimer with protein bS6 to the central domain of the 16S rRNA, where it helps stabilize the platform of the 30S subunit. This Syntrophus aciditrophicus (strain SB) protein is Small ribosomal subunit protein bS18.